A 179-amino-acid polypeptide reads, in one-letter code: uncharacterized protein (179 aa).

A signal peptide spans 1–19 (MNTNVFRLLLLGSLFSLSA). Cys20 is lipidated: N-palmitoyl cysteine. The S-diacylglycerol cysteine moiety is linked to residue Cys20.

Its subcellular location is the cell membrane. This is an uncharacterized protein from Escherichia coli (strain K12).